The primary structure comprises 999 residues: Sarcoplasmic/endoplasmic reticulum calcium ATPase 3 (999 aa).

M1 is modified (N-acetylmethionine). Residues 1–48 (MEEAHLLSAADVLRRFSVTAEGGLSLEQVTDARERYGPNELPTEEGKS) are Cytoplasmic-facing. S17 carries the post-translational modification Phosphoserine. T19 carries the phosphothreonine modification. S25 is modified (phosphoserine). A helical transmembrane segment spans residues 49–69 (LWELVVEQFEDLLVRILLLAA). The Lumenal segment spans residues 70 to 89 (LVSFVLAWFEEGEETTTAFV). A helical membrane pass occupies residues 90-110 (EPLVIMLILVANAIVGVWQER). Residues 111 to 253 (NAESAIEALK…PERTPLQRKL (143 aa)) lie on the Cytoplasmic side of the membrane. Residues 254–273 (DEFGRQLSHAISVICVAVWV) form a helical membrane-spanning segment. Over 274–295 (INIGHFADPAHGGSWLRGAVYY) the chain is Lumenal. Residues 296–313 (FKIAVALAVAAIPEGLPA) traverse the membrane as a helical segment. Ca(2+)-binding residues include V304, A305, I307, and E309. Residues 314–757 (VITTCLALGT…EEGRAIYNNM (444 aa)) lie on the Cytoplasmic side of the membrane. Residue D351 is the 4-aspartylphosphate intermediate of the active site. D351 and T353 together coordinate Mg(2+). Residue T353 coordinates ATP. The tract at residues 370-400 (AEAEAGTCRLHEFTISGTTYTPEGEVRQGEQ) is interaction with phospholamban 1. Residue T415 is modified to Phosphothreonine. The ATP site is built by E442, R489, K515, R560, T625, G626, and D627. The residue at position 662 (S662) is a Phosphoserine. ATP-binding residues include R678 and K684. Residue D703 coordinates Mg(2+). N706 is an ATP binding site. Residues 758-777 (KQFIRYLISSNVGEVVCIFL) traverse the membrane as a helical segment. Residues N768 and E771 each contribute to the Ca(2+) site. The Lumenal portion of the chain corresponds to 778–787 (TAILGLPEAL). A helical transmembrane segment spans residues 788–808 (IPVQLLWVNLVTDGLPATALG). Positions 788–808 (IPVQLLWVNLVTDGLPATALG) are interaction with phospholamban 2. Residues N796, T799, and D800 each coordinate Ca(2+). The Cytoplasmic segment spans residues 809-828 (FNPPDLDIMEKPPRNPREAL). Residues 829–851 (ISGWLFFRYLAIGVYVGLATVAA) form a helical membrane-spanning segment. Topologically, residues 852 to 897 (ATWWFLYDTEGPQVTFYQLRNFLKCSEDNPLFAGIDCKVFESRFPT) are lumenal. Residues 898–917 (TMALSVLVTIEMCNALNSVS) form a helical membrane-spanning segment. E908 lines the Ca(2+) pocket. Residues 918–930 (ENQSLLRMPPWLN) are Cytoplasmic-facing. Residues 931–949 (PWLLGAVVMSMALHFLILL) form a helical membrane-spanning segment. Residues 950–964 (VPPLPLIFQVTPLSG) lie on the Lumenal side of the membrane. Residues 965 to 985 (RQWGVVLQMSLPVILLDEALK) form a helical membrane-spanning segment. Over 986–999 (YLSRNHMDEKKDLK) the chain is Cytoplasmic.

This sequence belongs to the cation transport ATPase (P-type) (TC 3.A.3) family. Type IIA subfamily. As to quaternary structure, interacts with sarcolipin (SLN). Interacts with phospholamban (PLN). Interacts with myoregulin (MRLN). Interacts with DWORF. Interacts with VMP1. Interacts with TUNAR; the interaction occurs at low levels in low glucose conditions and is increased by high glucose levels. Mg(2+) serves as cofactor.

The protein localises to the endoplasmic reticulum membrane. It localises to the sarcoplasmic reticulum membrane. The enzyme catalyses Ca(2+)(in) + ATP + H2O = Ca(2+)(out) + ADP + phosphate + H(+). Inhibited by sarcolipin (SLN), phospholamban (PLN) and myoregulin (MRLN). Enhanced by DWORF; DWORF increases activity by displacing sarcolipin (SLN), phospholamban (PLN) and myoregulin (MRLN). Its function is as follows. This magnesium-dependent enzyme catalyzes the hydrolysis of ATP coupled with the transport of calcium. Transports calcium ions from the cytosol into the sarcoplasmic/endoplasmic reticulum lumen. Contributes to calcium sequestration involved in muscular excitation/contraction. This is Sarcoplasmic/endoplasmic reticulum calcium ATPase 3 (Atp2a3) from Mus musculus (Mouse).